A 1347-amino-acid polypeptide reads, in one-letter code: Serine-aspartate repeat-containing protein D (1347 aa).

Positions 1–35 are cleaved as a signal peptide; the sequence is MLNRENKTAITRKGMVSNRLNKFSIRKYTVGTASI. A YSIRK-G/S signaling motif motif is present at residues 23-34; it reads FSIRKYTVGTAS. A ligand binding A region region spans residues 36–568; it reads LVGTTLIFGL…NNQSGGAGQE (533 aa). A disordered region spans residues 55 to 185; sequence STNKELNEAT…NKKVDAKTES (131 aa). 2 stretches are compositionally biased toward polar residues: residues 62-71 and 94-109; these read EATTSASDNQ and EMVSSQGNETTSNGNK. Over residues 130 to 145 the composition is skewed to basic and acidic residues; that stretch reads KSDEQASPKSTNEDLN. 2 stretches are compositionally biased toward polar residues: residues 146 to 155 and 163 to 173; these read TKQTISNQEA and NKSVVNAQPTN. Over residues 174 to 183 the composition is skewed to basic and acidic residues; sequence EENKKVDAKT. CNA-B domains lie at 569 to 680, 681 to 791, 792 to 901, 902 to 1012, and 1013 to 1123; these read VYKI…IYKP, KYNL…YKTP, KYNL…FYKP, TYNL…YKTS, and KYSL…EEDT. Disordered stretches follow at residues 857–883, 972–992, and 1078–1323; these read ETPSGYTPTQVGSGTDEGIDSNGTSTT, YTPTSVTSGNDTEKDSNGLTT, and EKPA…SNNA. Composition is skewed to polar residues over residues 860–869 and 972–981; these read SGYTPTQVGS and YTPTSVTSGN. 2 stretches are compositionally biased toward acidic residues: residues 1091–1101 and 1118–1286; these read TEDDKDADGGE and YFEE…DSDS. Residues 1310–1314 carry the LPXTG sorting signal motif; sequence LPETG. At T1313 the chain carries Pentaglycyl murein peptidoglycan amidated threonine. A propeptide spans 1314–1347 (removed by sortase); the sequence is GNENSGSNNATLFGGLFAALGSLLLFGRRKKQNK.

The protein belongs to the serine-aspartate repeat-containing protein (SDr) family. In terms of assembly, interacts with host DSG1; this interaction increases S.aureus adherence to keratinocytes.

It localises to the secreted. The protein resides in the cell wall. Functionally, cell surface-associated calcium-binding protein which plays an important role in adhesion and pathogenesis. Mediates interactions with components of the extracellular matrix such as host DSG1 to promote bacterial adhesion to host cells. Contributes to the resistance to killing by innate immune components such as neutrophils present in blood and thus attenuates bacterial clearance. In Staphylococcus aureus (strain MW2), this protein is Serine-aspartate repeat-containing protein D (sdrD).